The chain runs to 242 residues: Floral homeotic protein AGAMOUS (242 aa).

In terms of domain architecture, MADS-box spans Arg19–Tyr73. Positions Ala103–Ala193 constitute a K-box domain.

In terms of tissue distribution, flower. Preferentially expressed in stamen and carpel and weakly in petal. Undetected in leaves and roots.

The protein resides in the nucleus. Its function is as follows. Probable transcription factor involved in regulating genes that determines stamen and carpel development in wild-type flowers. The sequence is that of Floral homeotic protein AGAMOUS (AG2) from Panax ginseng (Korean ginseng).